We begin with the raw amino-acid sequence, 1170 residues long: Thrombospondin-2 (1170 aa).

The first 18 residues, 1–18 (MLWPLLLLALWAWPSAQA), serve as a signal peptide directing secretion. One can recognise a Laminin G-like domain in the interval 19 to 215 (GDQDEDTAFD…LQNVYLVFEN (197 aa)). Residues 19–232 (GDQDEDTAFD…KKGCQQSQGA (214 aa)) form a heparin-binding region. 3 N-linked (GlcNAc...) asparagine glycosylation sites follow: asparagine 151, asparagine 316, and asparagine 330. One can recognise a VWFC domain in the interval 318–375 (SACWQDGRFFAENETWVVDSCTKCTCKKFKTVCHQISCPPATCADPWFVEGECCPSCV). TSP type-1 domains lie at 379–429 (EEGW…GRCD), 435–490 (DGGW…PPCP), and 492–547 (DGRW…KSCP). Disulfide bonds link cysteine 391–cysteine 423, cysteine 395–cysteine 428, cysteine 406–cysteine 413, cysteine 447–cysteine 484, cysteine 451–cysteine 489, cysteine 462–cysteine 474, cysteine 504–cysteine 541, cysteine 508–cysteine 546, cysteine 519–cysteine 531, cysteine 551–cysteine 562, cysteine 556–cysteine 572, cysteine 575–cysteine 586, cysteine 592–cysteine 608, cysteine 599–cysteine 617, cysteine 620–cysteine 644, cysteine 650–cysteine 663, cysteine 657–cysteine 676, cysteine 678–cysteine 689, cysteine 705–cysteine 713, cysteine 718–cysteine 738, cysteine 754–cysteine 774, cysteine 777–cysteine 797, cysteine 813–cysteine 833, cysteine 836–cysteine 856, cysteine 874–cysteine 894, and cysteine 910–cysteine 930. Asparagine 455 carries an N-linked (GlcNAc...) asparagine glycan. The EGF-like 1 domain occupies 547 to 587 (PIDGCLSNPCFPGAECSSFPDGSWSCGSCPGGFLGNGTHCE). N-linked (GlcNAc...) asparagine glycosylation occurs at asparagine 582. The EGF-like 2 domain maps to 646–690 (PENPCKDKTHSCHRHAECIYLGHFSDPMYKCECQTGYAGDGLICG). TSP type-3 repeat units follow at residues 691–726 (EDSD…NSGQ), 727–762 (EDFD…NPRQ), 763–785 (FDYD…NPAQ), 786–821 (IDTD…NTDQ), 822–844 (RDTD…NPDQ), 845–882 (TDVD…NANQ), 883–918 (ADHD…NPDQ), and 919–954 (EDSD…AISE). Asparagine 708 carries an N-linked (GlcNAc...) asparagine glycan. A disordered region spans residues 731 to 750 (KDGIGDACDDDDDNDGVSDE). A compositionally biased stretch (acidic residues) spans 737 to 747 (ACDDDDDNDGV). Residues 841–944 (NPDQTDVDND…DNDSIPDIDD (104 aa)) form a disordered region. Composition is skewed to acidic residues over residues 845–864 (TDVD…DIDE) and 894–903 (CDSDDDNDGI). A compositionally biased stretch (basic and acidic residues) spans 923-933 (GDRRGDACKDD). The Cell attachment site signature appears at 926 to 928 (RGD). A compositionally biased stretch (acidic residues) spans 934–944 (FDNDSIPDIDD). N-linked (GlcNAc...) asparagine glycosylation is found at asparagine 936 and asparagine 1067. A disulfide bridge links cysteine 946 with cysteine 1167. The 213-residue stretch at 958 to 1170 (RNFQMVHLDP…SDLKYECRDV (213 aa)) folds into the TSP C-terminal domain.

The protein belongs to the thrombospondin family. Homotrimer; disulfide-linked. Can bind to fibrinogen, fibronectin, laminin and type V collagen. Interacts (via the TSP type I repeats) with CD36; the interaction conveys an antiangiogenic effect. Interacts (via the TSP type I repeats) with HRG; the interaction blocks the antiangiogenic effect of THBS2 with CD36.

Its function is as follows. Adhesive glycoprotein that mediates cell-to-cell and cell-to-matrix interactions. Ligand for CD36 mediating antiangiogenic properties. The polypeptide is Thrombospondin-2 (THBS2) (Bos taurus (Bovine)).